The primary structure comprises 645 residues: Ethylene response sensor 2 (645 aa).

4 helical membrane-spanning segments follow: residues 5 to 25 (LLVQ…VTAA), 54 to 74 (VGDF…VYFV), 86 to 106 (VVCE…LAGF), and 125 to 145 (LTGI…PLLL). Positions 97 and 101 each coordinate Cu cation. Positions 190 to 346 (DRHTILYTTL…VVADQVAVAI (157 aa)) constitute a GAF domain. The 235-residue stretch at 389–623 (MMSDAMRCPV…VFRFQLRRSM (235 aa)) folds into the Histidine kinase domain.

The protein belongs to the ethylene receptor family. As to quaternary structure, heteromer with ETR1. Cu cation serves as cofactor. Post-translationally, autophosphorylated predominantly on Ser residues. As to expression, expressed in etiolated seedlings, leaves, roots and stems. Highly expressed in flowers, stamens, pollen cells, tapetum cells, carpels and ovules.

The protein resides in the endoplasmic reticulum membrane. In terms of biological role, ethylene receptor related to bacterial two-component regulators. Acts as a redundant negative regulator of ethylene signaling. This chain is Ethylene response sensor 2 (ERS2), found in Arabidopsis thaliana (Mouse-ear cress).